The following is a 137-amino-acid chain: Small ribosomal subunit protein uS9 (137 aa).

Residues L105–A117 are compositionally biased toward basic and acidic residues. Positions L105–R137 are disordered. Basic residues predominate over residues K118–R137.

The protein belongs to the universal ribosomal protein uS9 family.

In Prochlorococcus marinus (strain MIT 9211), this protein is Small ribosomal subunit protein uS9.